Consider the following 218-residue polypeptide: Thiopurine S-methyltransferase (218 aa).

S-adenosyl-L-methionine-binding residues include tryptophan 10, leucine 45, glutamate 66, and arginine 123.

The protein belongs to the class I-like SAM-binding methyltransferase superfamily. TPMT family.

Its subcellular location is the cytoplasm. The enzyme catalyses S-adenosyl-L-methionine + a thiopurine = S-adenosyl-L-homocysteine + a thiopurine S-methylether.. The polypeptide is Thiopurine S-methyltransferase (Shewanella sp. (strain MR-7)).